The chain runs to 327 residues: Ferrochelatase (327 aa).

The Fe cation site is built by His187 and Glu265.

The protein belongs to the ferrochelatase family.

It localises to the cytoplasm. The enzyme catalyses heme b + 2 H(+) = protoporphyrin IX + Fe(2+). Its pathway is porphyrin-containing compound metabolism; protoheme biosynthesis; protoheme from protoporphyrin-IX: step 1/1. Functionally, catalyzes the ferrous insertion into protoporphyrin IX. This Chlamydia pneumoniae (Chlamydophila pneumoniae) protein is Ferrochelatase.